We begin with the raw amino-acid sequence, 99 residues long: MQVLVRDNNVDQALKALKKKMQREGIFREMKLRGHYEKPSEKKAREKAEAVRRARKLARKKLQREGLLPMKPKPVFGAGPGGDRRGPGAGPGAGPRPAR.

Residues 60-99 form a disordered region; the sequence is KKLQREGLLPMKPKPVFGAGPGGDRRGPGAGPGAGPRPAR.

This sequence belongs to the bacterial ribosomal protein bS21 family.

The polypeptide is Small ribosomal subunit protein bS21 (Rhodopseudomonas palustris (strain BisA53)).